A 503-amino-acid polypeptide reads, in one-letter code: Cobyric acid synthase (503 aa).

Positions 255 to 444 (DIDIAVIRYP…FHDLFHNDAF (190 aa)) constitute a GATase cobBQ-type domain. The Nucleophile role is filled by Cys-337. His-436 is an active-site residue.

The protein belongs to the CobB/CobQ family. CobQ subfamily.

The protein operates within cofactor biosynthesis; adenosylcobalamin biosynthesis. Functionally, catalyzes amidations at positions B, D, E, and G on adenosylcobyrinic A,C-diamide. NH(2) groups are provided by glutamine, and one molecule of ATP is hydrogenolyzed for each amidation. This Geobacillus sp. (strain WCH70) protein is Cobyric acid synthase.